Here is a 376-residue protein sequence, read N- to C-terminus: MSKGKVLLVLYEGGKHAEEQEKLLGCIENELGIRNFIEEQGYELVTTIDKDPEPTSTVDRELKDAEIVITTPFFPAYISRNRIAEAPNLKLCVTAGVGSDHVDLEAANERKITVTEVTGSNVVSVAEHVMATILVLIRNYNGGHQQAINGEWDIAGVAKNEYDLEDKIISTVGAGRIGYRVLERLVAFNPKKLLYYDYQELPAEAINRLNEASKLFNGRGDIVQRVEKLEDMVAQSDVVTINCPLHKDSRGLFNKKLISHMKDGAYLVNTARGAICVAEDVAEAVKSGKLAGYGGDVWDKQPAPKDHPWRTMDNKDHVGNAMTVHISGTSLDAQKRYAQGVKNILNSYFSKKFDYRPQDIIVQNGSYATRAYGQKK.

2 residues coordinate substrate: V97 and N121. NAD(+) contacts are provided by residues 176-177 (RI), D197, 244-248 (PLHKD), T270, D296, and 325-328 (HISG).

Belongs to the D-isomer specific 2-hydroxyacid dehydrogenase family. FDH subfamily. Homodimer.

It is found in the cytoplasm. The catalysed reaction is formate + NAD(+) = CO2 + NADH. In terms of biological role, catalyzes the NAD(+)-dependent oxidation of formate to carbon dioxide. Formate oxidation is the final step in the methanol oxidation pathway in methylotrophic microorganisms. Has a role in the detoxification of exogenous formate in non-methylotrophic organisms. The chain is Formate dehydrogenase 1 (FDH1) from Saccharomyces cerevisiae (strain YJM789) (Baker's yeast).